Reading from the N-terminus, the 248-residue chain is Tyrosine recombinase XerD-like (248 aa).

Residues 1–72 (MKSYIEPFIA…TANQFLYYLY (72 aa)) form the Core-binding (CB) domain. The Tyr recombinase domain maps to 85-248 (DTMKVMRTEK…PVTLEKYYKS (164 aa)). Residues lysine 149 and arginine 213 contribute to the active site. Tyrosine 245 serves as the catalytic O-(3'-phospho-DNA)-tyrosine intermediate.

It belongs to the 'phage' integrase family. XerD-like subfamily.

The protein resides in the cytoplasm. In terms of biological role, putative tyrosine recombinase. Not involved in the cutting and rejoining of the recombining DNA molecules on dif(SL) site. This chain is Tyrosine recombinase XerD-like, found in Streptococcus pyogenes serotype M6 (strain ATCC BAA-946 / MGAS10394).